A 362-amino-acid polypeptide reads, in one-letter code: N-alpha-acetyltransferase 30 (362 aa).

The span at Met1–Pro20 shows a compositional bias: pro residues. 3 disordered regions span residues Met1–Arg26, Cys38–Ile88, and Ala113–Glu182. Ser39 and Ser55 each carry phosphoserine. Residues Ser39–His48 are compositionally biased toward acidic residues. At Thr117 the chain carries Phosphothreonine. Low complexity predominate over residues Ala149 to Ala165. Ser152 is subject to Phosphoserine. Positions Thr173–Glu182 are enriched in acidic residues. Ser190, Ser196, and Ser199 each carry phosphoserine. One can recognise an N-acetyltransferase domain in the interval Arg214–Arg362. Lys233 carries the N6-acetyllysine modification.

The protein belongs to the acetyltransferase family. MAK3 subfamily. In terms of assembly, component of the N-terminal acetyltransferase C (NatC) complex, which is composed of NAA35, NAA38 and NAA30.

Its subcellular location is the cytoplasm. The protein resides in the nucleus. The enzyme catalyses N-terminal L-methionyl-L-leucyl-[protein] + acetyl-CoA = N-terminal N(alpha)-acetyl-L-methionyl-L-leucyl-[protein] + CoA + H(+). It catalyses the reaction N-terminal L-methionyl-L-isoleucyl-[protein] + acetyl-CoA = N-terminal N(alpha)-acetyl-L-methionyl-L-isoleucyl-[protein] + CoA + H(+). The catalysed reaction is N-terminal L-methionyl-L-phenylalanyl-[protein] + acetyl-CoA = N-terminal N(alpha)-acetyl-L-methionyl-L-phenylalanyl-[protein] + CoA + H(+). It carries out the reaction N-terminal L-methionyl-L-tryptophyl-[protein] + acetyl-CoA = N-terminal N(alpha)-acetyl-L-methionyl-L-tryptophyl-[protein] + CoA + H(+). The enzyme catalyses N-terminal L-methionyl-L-tyrosyl-[protein] + acetyl-CoA = N-terminal N(alpha)-acetyl-L-methionyl-L-tyrosyl-[protein] + CoA + H(+). Functionally, catalytic subunit of the N-terminal acetyltransferase C (NatC) complex. Catalyzes acetylation of the N-terminal methionine residues of peptides beginning with Met-Leu-Ala and Met-Leu-Gly. N-terminal acetylation protects proteins from ubiquitination and degradation by the N-end rule pathway. Necessary for the lysosomal localization and function of ARL8B sugeesting that ARL8B is a NatC substrate. The sequence is that of N-alpha-acetyltransferase 30 (NAA30) from Homo sapiens (Human).